The chain runs to 659 residues: Putative cysteine-rich receptor-like protein kinase 39 (659 aa).

The N-terminal stretch at 1–27 is a signal peptide; sequence MGKYSVLMIFIASSLLIVLQNVEIVNA. 2 Gnk2-homologous domains span residues 28–134 and 142–253; these read VGCT…NHST and PSVR…LYAF. The Extracellular segment spans residues 28–289; it reads VGCTGSFFNG…KKKGRSIGYG (262 aa). N-linked (GlcNAc...) asparagine glycans are attached at residues N38, N64, N122, N131, N157, N170, N259, and N274. Residues 290-310 traverse the membrane as a helical segment; sequence GIIAIVVVLTFINILVFIGYI. The Cytoplasmic portion of the chain corresponds to 311 to 659; the sequence is KVYGRRKESY…DDVFTELSCR (349 aa). The 267-residue stretch at 353–619 folds into the Protein kinase domain; the sequence is FSSENTLGQG…PTMSSVIIWL (267 aa). Residues 359-367 and K381 contribute to the ATP site; that span reads LGQGGFGTV. Y426 is subject to Phosphotyrosine. The Proton acceptor role is filled by D478. S482 bears the Phosphoserine mark. T518 is modified (phosphothreonine). Y526 carries the phosphotyrosine modification.

This sequence belongs to the protein kinase superfamily. Ser/Thr protein kinase family. CRK subfamily.

Its subcellular location is the membrane. It carries out the reaction L-seryl-[protein] + ATP = O-phospho-L-seryl-[protein] + ADP + H(+). The catalysed reaction is L-threonyl-[protein] + ATP = O-phospho-L-threonyl-[protein] + ADP + H(+). The chain is Putative cysteine-rich receptor-like protein kinase 39 (CRK39) from Arabidopsis thaliana (Mouse-ear cress).